Here is a 208-residue protein sequence, read N- to C-terminus: Ribosomal RNA large subunit methyltransferase E (208 aa).

Residues Gly-63, Trp-65, Asp-83, Asp-99, and Asp-124 each coordinate S-adenosyl-L-methionine. Lys-164 (proton acceptor) is an active-site residue.

It belongs to the class I-like SAM-binding methyltransferase superfamily. RNA methyltransferase RlmE family.

Its subcellular location is the cytoplasm. It catalyses the reaction uridine(2552) in 23S rRNA + S-adenosyl-L-methionine = 2'-O-methyluridine(2552) in 23S rRNA + S-adenosyl-L-homocysteine + H(+). Its function is as follows. Specifically methylates the uridine in position 2552 of 23S rRNA at the 2'-O position of the ribose in the fully assembled 50S ribosomal subunit. In Salmonella typhi, this protein is Ribosomal RNA large subunit methyltransferase E.